The primary structure comprises 185 residues: Large ribosomal subunit protein uL22 (185 aa).

Belongs to the universal ribosomal protein uL22 family. As to quaternary structure, part of the 50S ribosomal subunit.

In terms of biological role, this protein binds specifically to 23S rRNA. It makes multiple contacts with different domains of the 23S rRNA in the assembled 50S subunit and ribosome. Its function is as follows. The globular domain of the protein is located near the polypeptide exit tunnel on the outside of the subunit, while an extended beta-hairpin is found that lines the wall of the exit tunnel in the center of the 70S ribosome. The polypeptide is Large ribosomal subunit protein uL22 (Caldivirga maquilingensis (strain ATCC 700844 / DSM 13496 / JCM 10307 / IC-167)).